Reading from the N-terminus, the 164-residue chain is MTRSKSTTETTRAARQARIVAILSSAQVRSQSELAALLADEGIEVTQATLSRDLEELGAVKLRGADGGVGVYMVPEDGSPVRGVSGGTARLSRLLSELLVSADASANLAVLRTPPGAADYLASAIDRAALPYVVGTIAGDDTVFVAARDPMTGAELADTLEKLT.

Belongs to the ArgR family.

Its subcellular location is the cytoplasm. It participates in amino-acid biosynthesis; L-arginine biosynthesis [regulation]. Regulates arginine biosynthesis genes. The sequence is that of Arginine repressor from Mycolicibacterium paratuberculosis (strain ATCC BAA-968 / K-10) (Mycobacterium paratuberculosis).